Here is a 396-residue protein sequence, read N- to C-terminus: Deoxyuridine 5'-triphosphate nucleotidohydrolase (396 aa).

Residues 280 to 282 (RSS) and 380 to 381 (FG) contribute to the substrate site.

It belongs to the dUTPase family. It depends on Mg(2+) as a cofactor.

It carries out the reaction dUTP + H2O = dUMP + diphosphate + H(+). Involved in nucleotide metabolism: produces dUMP, the immediate precursor of thymidine nucleotides and decreases the intracellular concentration of dUTP to avoid uracil incorporation into viral DNA. The protein is Deoxyuridine 5'-triphosphate nucleotidohydrolase of Varicella-zoster virus (strain Dumas) (HHV-3).